The following is a 583-amino-acid chain: MDAILPVPVDGFRFDTGSGSCCKPRNNLESGTTNRFTCFNESESQSNPSPTESKVCSDYLPVFKYINDMLMEEDLEGQSCMLEDSLALQAAERSFFEVLQDQTPISGDLEDGSLGNFSSITSLHQPEVSEESTRRYRHRDDDEDDDLESGRKSKLPAISTVDELAEKFEEVLLVCQKNDQGEATEKKTRHVKGSSNRYKQQKSDQPVDMRNLLMQCAQAVASFDQRRAFEKLKEIREHSSRHGDATQRLGYHFAEALEARITGTMTTPISATSSRTSMVDILKAYKGFVQACPTLIMCYFTANRTINELASKATTLHIIDFGILYGFQWPCLIQALSKRDIGPPLLRVTGIELPQSGFRPSERVEETGRRLKRFCDKFNVPFEYSFIAKNWENITLDDLVINSGETTVVNCILRLQYTPDETVSLNSPRDTALKLFRDINPDLFVFAEINGTYNSPFFLTRFREALFHCSSLFDMYETTLSEDDNCRTLVERELIIRDAMSVIACEGSERFARPETYKQWQVRILRAGFRPAKLSKQIVKDGKEIVKERYHKDFVIDNDNHWMFQGWKGRVLYAVSCWKPAKK.

Disordered stretches follow at residues 107 to 154 (GDLE…RKSK) and 182 to 205 (EATE…KSDQ). The segment covering 115–124 (GNFSSITSLH) has biased composition (polar residues). The span at 131–140 (ESTRRYRHRD) shows a compositional bias: basic and acidic residues. The 380-residue stretch at 200–579 (QQKSDQPVDM…RVLYAVSCWK (380 aa)) folds into the GRAS domain. The segment at 207-266 (VDMRNLLMQCAQAVASFDQRRAFEKLKEIREHSSRHGDATQRLGYHFAEALEARITGTMT) is leucine repeat I (LRI). Residues 285–350 (YKGFVQACPT…IGPPLLRVTG (66 aa)) form a VHIID region. A VHIID motif is present at residues 316-320 (LHIID). The leucine repeat II (LRII) stretch occupies residues 366–398 (ETGRRLKRFCDKFNVPFEYSFIAKNWENITLDD). Positions 407–501 (TVVNCILRLQ…RELIIRDAMS (95 aa)) are PFYRE. Positions 504–579 (ACEGSERFAR…RVLYAVSCWK (76 aa)) are SAW.

Belongs to the GRAS family. As to quaternary structure, interacts with SNRNP35 and CYP95. As to expression, expressed in seedlings, leaves, sepals, stamen and pistil, and in the quiescent center of root meristem.

It is found in the nucleus. Its function is as follows. Probable transcription factor involved in plant development. The chain is Scarecrow-like protein 30 (SCL30) from Arabidopsis thaliana (Mouse-ear cress).